We begin with the raw amino-acid sequence, 876 residues long: Liprin-beta-2 (876 aa).

The stretch at 101–313 (AASNETYQER…TGLLNQYRKV (213 aa)) forms a coiled coil. 3 positions are modified to phosphoserine: Ser329, Ser363, and Ser387. Residues 356 to 376 (EMPPRCSSPTVGPPPLPQKSL) are disordered. 2 disordered regions span residues 425 to 451 (LPGK…PDAT) and 470 to 500 (VVND…PKGI). Positions 473 to 489 (DLSSTSSGTESGPQSPL) are enriched in polar residues. Position 512 is a phosphoserine (Ser512). A disordered region spans residues 527-553 (RGGLRATAGPRLSRTRDSKGQKSDANA). SAM domains are found at residues 558 to 622 (WSTE…INTK), 630 to 693 (LDHI…LHVN), and 718 to 783 (WSNH…KFNA).

It belongs to the liprin family. Liprin-beta subfamily. Forms homodimers and heterodimers. Widely expressed.

May regulate the disassembly of focal adhesions. Did not bind receptor-like tyrosine phosphatases type 2A. The sequence is that of Liprin-beta-2 (PPFIBP2) from Homo sapiens (Human).